Here is a 273-residue protein sequence, read N- to C-terminus: MAIHLYKTSTPSTRKGAVDSQAKSNPRTKLIYGQHRCGKGRNARGIITARHRGGGHKRLYRKIDFRRNEKDISGRIVTIEYDPNRNAYICLIHYGDGEKRYILHPRGAIIGDTIVSGTEVPISMGNALPLTDMPLGTAIHNIEITLGKGGQLARAAGAVAKLIAKEGKSATLRLPSGEVRLISKNCSATVGQVGNVGANQKSLGRAGSKCWLGKRPVVRGVVMNPVDHPHGGGEGRAPIGRKKPTTPWGYPALGRRSRKRNKYSDIFILRRRK.

Disordered stretches follow at residues 1-24 (MAIH…QAKS) and 224-254 (NPVD…PALG).

This sequence belongs to the universal ribosomal protein uL2 family. Part of the 50S ribosomal subunit.

The protein localises to the plastid. It localises to the chloroplast. This is Large ribosomal subunit protein uL2cz/uL2cy (rpl2-A) from Nymphaea alba (White water-lily).